The following is a 369-amino-acid chain: UDP-N-acetylenolpyruvoylglucosamine reductase (369 aa).

Residues 29-202 (VGPIARRVIT…LEVEFALDPS (174 aa)) enclose the FAD-binding PCMH-type domain. The active site involves Arg-176. The Proton donor role is filled by Ser-257. Glu-361 is a catalytic residue.

This sequence belongs to the MurB family. FAD is required as a cofactor.

It localises to the cytoplasm. The enzyme catalyses UDP-N-acetyl-alpha-D-muramate + NADP(+) = UDP-N-acetyl-3-O-(1-carboxyvinyl)-alpha-D-glucosamine + NADPH + H(+). The protein operates within cell wall biogenesis; peptidoglycan biosynthesis. Cell wall formation. The polypeptide is UDP-N-acetylenolpyruvoylglucosamine reductase (Mycobacterium tuberculosis (strain ATCC 25177 / H37Ra)).